The sequence spans 238 residues: Ribonuclease PH (238 aa).

Residues Arg86 and 124–126 (GTR) contribute to the phosphate site.

This sequence belongs to the RNase PH family. Homohexameric ring arranged as a trimer of dimers.

The enzyme catalyses tRNA(n+1) + phosphate = tRNA(n) + a ribonucleoside 5'-diphosphate. In terms of biological role, phosphorolytic 3'-5' exoribonuclease that plays an important role in tRNA 3'-end maturation. Removes nucleotide residues following the 3'-CCA terminus of tRNAs; can also add nucleotides to the ends of RNA molecules by using nucleoside diphosphates as substrates, but this may not be physiologically important. Probably plays a role in initiation of 16S rRNA degradation (leading to ribosome degradation) during starvation. This is Ribonuclease PH from Parvibaculum lavamentivorans (strain DS-1 / DSM 13023 / NCIMB 13966).